A 160-amino-acid polypeptide reads, in one-letter code: Cytochrome b6-f complex subunit 4 (160 aa).

Transmembrane regions (helical) follow at residues 36–56 (LLYIFPVVILGTIACNVGLAV), 95–115 (LLGVLLMVSVPTGLLTVPFLE), and 131–151 (TVFLIGTAVALWLGIGATLPI).

It belongs to the cytochrome b family. PetD subfamily. As to quaternary structure, the 4 large subunits of the cytochrome b6-f complex are cytochrome b6, subunit IV (17 kDa polypeptide, petD), cytochrome f and the Rieske protein, while the 4 small subunits are petG, petL, petM and petN. The complex functions as a dimer.

It is found in the plastid. The protein localises to the chloroplast thylakoid membrane. Its function is as follows. Component of the cytochrome b6-f complex, which mediates electron transfer between photosystem II (PSII) and photosystem I (PSI), cyclic electron flow around PSI, and state transitions. The polypeptide is Cytochrome b6-f complex subunit 4 (Oryza nivara (Indian wild rice)).